The following is an 848-amino-acid chain: Probable disease resistance protein At5g43730 (848 aa).

The stretch at 25–62 (SNYIHLMESNLDALQKTMEELKNGRDDLLARVSIEEDK) forms a coiled coil. One can recognise an NB-ARC domain in the interval 137–439 (VAQKIIPKAE…CEGYINPNRY (303 aa)). An ATP-binding site is contributed by 179–186 (GMGGIGKT). 5 LRR repeats span residues 534-555 (NLST…FFLF), 558-580 (KLVV…ISNL), 582-604 (SLQY…KKLR), 605-627 (KLIY…ATTL), and 629-649 (NLQV…IMEE).

Belongs to the disease resistance NB-LRR family.

In terms of biological role, probable disease resistance protein. This is Probable disease resistance protein At5g43730 from Arabidopsis thaliana (Mouse-ear cress).